The chain runs to 280 residues: DegV domain-containing protein TTE1491 (280 aa).

The 276-residue stretch at 4–279 (IAIVTDSLSD…PDAAGVFFEE (276 aa)) folds into the DegV domain. The hexadecanoate site is built by T61 and S93.

Functionally, may bind long-chain fatty acids, such as palmitate, and may play a role in lipid transport or fatty acid metabolism. In Caldanaerobacter subterraneus subsp. tengcongensis (strain DSM 15242 / JCM 11007 / NBRC 100824 / MB4) (Thermoanaerobacter tengcongensis), this protein is DegV domain-containing protein TTE1491.